The chain runs to 501 residues: MNKHFAKLSQWTGEKFGFDRQKTTLSDDFCSLKGETDAWLVGMDKIHRSCTRWVRNMDKRKGLLDEKDKQLPVTHVGSSFVELGQALSHSSSNSHTYIMYGKSMVEIGHLQEEFMDYLNNSFLANLENSLAEFKALDVKEKKMENRRLVFDALSTKIQKAKKEESKLEEDLRNARAKYEESLEEFEDRMVQLKELEPDRVENVVRLLQMQIRFHQKSLDLLKGLEMNGFSKKRDNVNIPKRTYSARSIPSNISSTNVATTPSNTIFEMDDTLKADSSSNEYHSPTNTLPSYHTEADLDNSSIASSNRTQHTEDNYNKDVSDAQNSLGQSAVDLTTPSSPPIPRHTKPKLSTTQSTPVKPASLQSEEDIQLSFKQPELSASSAELDEKLKSQCNVSPSPSNISDAPPSKLNRSYSSPLASISSRKVVRMKYSFEPETENELKLKKGDLLLVLKEIDEGWWVGEKLGEDGVFTGNTGMFPSNYCVPAHPWDKTFRAFLKKGFK.

One can recognise a BAR domain in the interval 14–237 (EKFGFDRQKT…GFSKKRDNVN (224 aa)). Thr285 bears the Phosphothreonine mark. Disordered regions lie at residues 302 to 321 (IASS…DVSD) and 329 to 414 (SAVD…RSYS). Over residues 309–320 (QHTEDNYNKDVS) the composition is skewed to basic and acidic residues. Polar residues predominate over residues 390–402 (SQCNVSPSPSNIS). The residue at position 414 (Ser414) is a Phosphoserine. The SH3 domain maps to 421-487 (SSRKVVRMKY…PSNYCVPAHP (67 aa)).

It is found in the cytoplasm. This is an uncharacterized protein from Schizosaccharomyces pombe (strain 972 / ATCC 24843) (Fission yeast).